The sequence spans 469 residues: Probable periplasmic serine endoprotease DegP-like (469 aa).

An N-terminal signal peptide occupies residues 1-25 (MKVCQKYTAVLLVWLSAVVSMRAGA). Residues histidine 108, aspartate 138, and serine 211 each act as charge relay system in the active site. Residues 209–211 (GNS) and 266–270 (LGVLI) each bind substrate. PDZ domains are found at residues 255–346 (LKDT…VRRG) and 352–457 (AVEI…IRQG).

This sequence belongs to the peptidase S1C family.

It is found in the periplasm. It catalyses the reaction Acts on substrates that are at least partially unfolded. The cleavage site P1 residue is normally between a pair of hydrophobic residues, such as Val-|-Val.. In terms of biological role, might be efficient in the degradation of transiently denatured and unfolded proteins which accumulate in the periplasm following stress conditions. This chain is Probable periplasmic serine endoprotease DegP-like (mucD), found in Hahella chejuensis (strain KCTC 2396).